A 234-amino-acid polypeptide reads, in one-letter code: Segregation and condensation protein A (234 aa).

The protein belongs to the ScpA family. As to quaternary structure, component of a cohesin-like complex composed of ScpA, ScpB and the Smc homodimer, in which ScpA and ScpB bind to the head domain of Smc. The presence of the three proteins is required for the association of the complex with DNA.

Its subcellular location is the cytoplasm. Functionally, participates in chromosomal partition during cell division. May act via the formation of a condensin-like complex containing Smc and ScpB that pull DNA away from mid-cell into both cell halves. This Streptococcus pyogenes serotype M12 (strain MGAS2096) protein is Segregation and condensation protein A.